The chain runs to 447 residues: Elongation factor 1-alpha (447 aa).

The region spanning 5–230 (KVHINIVVIG…DNINEPKRPS (226 aa)) is the tr-type G domain. The interval 14–21 (GHVDSGKS) is G1. 14 to 21 (GHVDSGKS) contributes to the GTP binding site. K55 is subject to N6,N6-dimethyllysine. The G2 stretch occupies residues 70 to 74 (GITID). K79 is modified (N6,N6,N6-trimethyllysine). Residues 91 to 94 (DAPG) form a G3 region. Residues 91–95 (DAPGH) and 153–156 (NKMD) each bind GTP. The segment at 153–156 (NKMD) is G4. N6,N6,N6-trimethyllysine is present on K187. A G5 region spans residues 194 to 196 (SGF). K261 is subject to N6-methyllysine. The residue at position 289 (E289) is a 5-glutamyl glycerylphosphorylethanolamine. The residue at position 306 (K306) is an N6,N6,N6-trimethyllysine. 5-glutamyl glycerylphosphorylethanolamine is present on E362. K396 carries the post-translational modification N6,N6,N6-trimethyllysine.

The protein belongs to the TRAFAC class translation factor GTPase superfamily. Classic translation factor GTPase family. EF-Tu/EF-1A subfamily.

It is found in the cytoplasm. In terms of biological role, this protein promotes the GTP-dependent binding of aminoacyl-tRNA to the A-site of ribosomes during protein biosynthesis. This Vicia faba (Broad bean) protein is Elongation factor 1-alpha.